Consider the following 338-residue polypeptide: Dehydrogenase/reductase SDR family member 7 (338 aa).

Residues 1–28 (MSWELLLWLLALCALILPLVQLLRFLRA) form the signal peptide. Residues Ser60 and Ile62 each contribute to the NAD(+) site. A substrate-binding site is contributed by Ser190. Residues Tyr203, Lys207, and Ser239 each coordinate NAD(+). Tyr203 (proton acceptor) is an active-site residue.

This sequence belongs to the short-chain dehydrogenases/reductases (SDR) family.

Its subcellular location is the endoplasmic reticulum membrane. It carries out the reaction all-trans-retinol + NADP(+) = all-trans-retinal + NADPH + H(+). The enzyme catalyses 5alpha-androstane-3alpha,17beta-diol + NADP(+) = 17beta-hydroxy-5alpha-androstan-3-one + NADPH + H(+). Its function is as follows. NADPH-dependent oxidoreductase which catalyzes the reduction of a variety of compounds bearing carbonyl groups including steroids, retinoids and xenobiotics. Catalyzes the reduction/inactivation of 5alpha-dihydrotestosterone to 3alpha-androstanediol, with a possible role in the modulation of androgen receptor function. Involved in the reduction of all-trans-retinal to all-trans-retinol. Converts cortisone to 20beta-dihydrocortisone in vitro, although the physiological relevance of this activity is questionable. Reduces exogenous compounds such as quinones (1,2-naphtoquinone, 9,10-phenantrenequinone and benzoquinone) and other xenobiotics (alpha-diketones) in vitro, suggesting a role in the biotransformation of xenobiotics with carbonyl group. A dehydrogenase activity has not been detected so far. May play a role as tumor suppressor. This is Dehydrogenase/reductase SDR family member 7 from Mus musculus (Mouse).